Consider the following 102-residue polypeptide: Putative defensin-like protein 152 (102 aa).

A signal peptide spans 1–29; the sequence is MKKASQLSTTILTIFIVLAIGMMVKGTVG. Disulfide bonds link Cys-34–Cys-93, Cys-51–Cys-71, Cys-56–Cys-87, and Cys-60–Cys-89.

It belongs to the DEFL family.

Its subcellular location is the secreted. The polypeptide is Putative defensin-like protein 152 (LCR11) (Arabidopsis thaliana (Mouse-ear cress)).